A 271-amino-acid polypeptide reads, in one-letter code: Phosphatidylglycerol--prolipoprotein diacylglyceryl transferase (271 aa).

7 consecutive transmembrane segments (helical) span residues 18–38 (IFGL…LVAL), 60–80 (YFIW…ILIY), 103–123 (FVGI…IATY), 137–157 (LDLV…GNFL), 181–201 (PSQL…LLLI), 209–229 (GELI…CEFF), and 236–256 (IGFV…MFLL). A 1,2-diacyl-sn-glycero-3-phospho-(1'-sn-glycerol) is bound at residue arginine 152.

It belongs to the Lgt family.

The protein resides in the cell inner membrane. The catalysed reaction is L-cysteinyl-[prolipoprotein] + a 1,2-diacyl-sn-glycero-3-phospho-(1'-sn-glycerol) = an S-1,2-diacyl-sn-glyceryl-L-cysteinyl-[prolipoprotein] + sn-glycerol 1-phosphate + H(+). It participates in protein modification; lipoprotein biosynthesis (diacylglyceryl transfer). In terms of biological role, catalyzes the transfer of the diacylglyceryl group from phosphatidylglycerol to the sulfhydryl group of the N-terminal cysteine of a prolipoprotein, the first step in the formation of mature lipoproteins. This Campylobacter lari (strain RM2100 / D67 / ATCC BAA-1060) protein is Phosphatidylglycerol--prolipoprotein diacylglyceryl transferase.